We begin with the raw amino-acid sequence, 364 residues long: Protein-glutamate methylesterase/protein-glutamine glutaminase (364 aa).

Residues Arg-7–Glu-124 form the Response regulatory domain. Asp-58 is modified (4-aspartylphosphate). One can recognise a CheB-type methylesterase domain in the interval Glu-167–Ser-364. Residues Ser-181, His-208, and Asp-308 contribute to the active site.

It belongs to the CheB family. Post-translationally, phosphorylated by CheA. Phosphorylation of the N-terminal regulatory domain activates the methylesterase activity.

Its subcellular location is the cytoplasm. The catalysed reaction is [protein]-L-glutamate 5-O-methyl ester + H2O = L-glutamyl-[protein] + methanol + H(+). It catalyses the reaction L-glutaminyl-[protein] + H2O = L-glutamyl-[protein] + NH4(+). In terms of biological role, involved in chemotaxis. Part of a chemotaxis signal transduction system that modulates chemotaxis in response to various stimuli. Catalyzes the demethylation of specific methylglutamate residues introduced into the chemoreceptors (methyl-accepting chemotaxis proteins or MCP) by CheR. Also mediates the irreversible deamidation of specific glutamine residues to glutamic acid. The chain is Protein-glutamate methylesterase/protein-glutamine glutaminase from Methanosarcina barkeri (strain Fusaro / DSM 804).